Consider the following 497-residue polypeptide: Kynureninase (497 aa).

The disordered stretch occupies residues 59-86 (GRLPAYPPNHAKPGETATAQNGTSNTND). Residues 75–86 (ATAQNGTSNTND) are compositionally biased toward polar residues. Pyridoxal 5'-phosphate contacts are provided by residues L166, T167, 194 to 197 (FPSD), D278, H281, and Y303. Position 304 is an N6-(pyridoxal phosphate)lysine (K304). Residues W337 and N365 each contribute to the pyridoxal 5'-phosphate site.

Belongs to the kynureninase family. As to quaternary structure, homodimer. Pyridoxal 5'-phosphate is required as a cofactor.

Its subcellular location is the cytoplasm. It carries out the reaction L-kynurenine + H2O = anthranilate + L-alanine + H(+). The catalysed reaction is 3-hydroxy-L-kynurenine + H2O = 3-hydroxyanthranilate + L-alanine + H(+). The protein operates within amino-acid degradation; L-kynurenine degradation; L-alanine and anthranilate from L-kynurenine: step 1/1. It functions in the pathway cofactor biosynthesis; NAD(+) biosynthesis; quinolinate from L-kynurenine: step 2/3. In terms of biological role, catalyzes the cleavage of L-kynurenine (L-Kyn) and L-3-hydroxykynurenine (L-3OHKyn) into anthranilic acid (AA) and 3-hydroxyanthranilic acid (3-OHAA), respectively. The protein is Kynureninase of Pyricularia oryzae (strain 70-15 / ATCC MYA-4617 / FGSC 8958) (Rice blast fungus).